Consider the following 128-residue polypeptide: Deoxycytidylate deaminase (128 aa).

One can recognise a CMP/dCMP-type deaminase domain in the interval 5 to 128; the sequence is DWDEYFLGIA…IERVVYPKES (124 aa). His81 is a binding site for Zn(2+). Catalysis depends on Glu83, which acts as the Proton donor. The Zn(2+) site is built by Cys107 and Cys110.

It belongs to the cytidine and deoxycytidylate deaminase family.

It catalyses the reaction dCMP + H2O + H(+) = dUMP + NH4(+). This is Deoxycytidylate deaminase (36.1) from Mycobacterium (Mycobacteriophage D29).